Reading from the N-terminus, the 333-residue chain is Autoinducer 2 import system permease protein LsrD (333 aa).

10 consecutive transmembrane segments (helical) span residues 7–27 (YGWE…FGLS), 45–65 (ICIG…GIDI), 67–87 (FGST…AGVP), 90–110 (VAIP…AGLI), 118–138 (LVIT…LSGL), 162–182 (LFGL…FWLL), 212–232 (TLCM…ILLV), 240–260 (SDLG…GGAN), 261–281 (IYGG…VGYL), and 288–308 (IGTP…LVVV).

It belongs to the binding-protein-dependent transport system permease family. AraH/RbsC subfamily. As to quaternary structure, the complex is composed of two ATP-binding proteins (LsrA), two transmembrane proteins (LsrC and LsrD) and a solute-binding protein (LsrB).

It is found in the cell inner membrane. In terms of biological role, part of the ABC transporter complex LsrABCD involved in autoinducer 2 (AI-2) import. Probably responsible for the translocation of the substrate across the membrane. In Yersinia pseudotuberculosis serotype IB (strain PB1/+), this protein is Autoinducer 2 import system permease protein LsrD (lsrD).